Reading from the N-terminus, the 366-residue chain is Elongation factor Ts, mitochondrial (366 aa).

The transit peptide at 1–50 directs the protein to the mitochondrion; it reads MAWSQSARKPMIGLLFRAQQHSARGYSYSAFQAHLSSSNVDQSATLLRRF.

Belongs to the EF-Ts family.

It localises to the mitochondrion. Functionally, associates with the EF-Tu.GDP complex and induces the exchange of GDP to GTP. It remains bound to the aminoacyl-tRNA.EF-Tu.GTP complex up to the GTP hydrolysis stage on the ribosome. This chain is Elongation factor Ts, mitochondrial, found in Oryza sativa subsp. japonica (Rice).